We begin with the raw amino-acid sequence, 407 residues long: Histone-lysine N-methyltransferase SUV39H2 (407 aa).

Residues 43 to 101 (YEVEYLCDYKVEEGKEYYLVKWKGWPESSNTWEPQKNLKCPKLLENFLSDKDEYLSRMK) form the Chromo domain. One can recognise a Pre-SET domain in the interval 185-243 (TGCECSDCPAEKCCPKEAGFILAYNKQKKLKIQPGLPIYECNSFCRCGPDCPNRIVQKG). Residues C187, C189, C192, C197, C198, C225, C229, C231, and C235 each contribute to the Zn(2+) site. Residues 246 to 369 (YSLCIFRTNN…AGEELTFDYQ (124 aa)) enclose the SET domain. Residues 257-259 (RGW), Y300, and 326-327 (NH) contribute to the S-adenosyl-L-methionine site. C329, C395, C397, and C402 together coordinate Zn(2+). Residues 391-407 (IRTVCKCGAVCCRGYLN) enclose the Post-SET domain.

It belongs to the class V-like SAM-binding methyltransferase superfamily. Histone-lysine methyltransferase family. Suvar3-9 subfamily.

It is found in the nucleus. The protein resides in the chromosome. The protein localises to the centromere. The enzyme catalyses L-lysyl(9)-[histone H3] + 3 S-adenosyl-L-methionine = N(6),N(6),N(6)-trimethyl-L-lysyl(9)-[histone H3] + 3 S-adenosyl-L-homocysteine + 3 H(+). In terms of biological role, histone methyltransferase that specifically trimethylates 'Lys-9' of histone H3 using monomethylated H3 'Lys-9' as substrate. H3 'Lys-9' trimethylation represents a specific tag for epigenetic transcriptional repression by recruiting HP1 (CBX1, CBX3 and/or CBX5) proteins to methylated histones. Mainly functions in heterochromatin regions, thereby playing a central role in the establishment of constitutive heterochromatin at pericentric and telomere regions. H3 'Lys-9' trimethylation is also required to direct DNA methylation at pericentric repeats. SUV39H1 is targeted to histone H3 via its interaction with RB1 and is involved in many processes. The protein is Histone-lysine N-methyltransferase SUV39H2 (SUV39H2) of Gallus gallus (Chicken).